A 247-amino-acid polypeptide reads, in one-letter code: Probable transcriptional regulatory protein DVU_2259 (247 aa).

Residues 1-22 (MAGHSKWANIQHRKGRQDAKRG) are disordered.

Belongs to the TACO1 family.

The protein resides in the cytoplasm. In Nitratidesulfovibrio vulgaris (strain ATCC 29579 / DSM 644 / CCUG 34227 / NCIMB 8303 / VKM B-1760 / Hildenborough) (Desulfovibrio vulgaris), this protein is Probable transcriptional regulatory protein DVU_2259.